The chain runs to 158 residues: Transcriptional repressor NrdR (158 aa).

Residues 1-22 form a disordered region; that stretch reads MRCPFCGSDDTQVKDSRPAEDN. A zinc finger lies at 3 to 34; the sequence is CPFCGSDDTQVKDSRPAEDNSAIRRRRICPDC. The segment covering 11–22 has biased composition (basic and acidic residues); sequence TQVKDSRPAEDN. The ATP-cone domain maps to 49–139; it reads LTVLKKTGRK…VYRDFSHAED (91 aa).

It belongs to the NrdR family. Requires Zn(2+) as cofactor.

Functionally, negatively regulates transcription of bacterial ribonucleotide reductase nrd genes and operons by binding to NrdR-boxes. The sequence is that of Transcriptional repressor NrdR from Allorhizobium ampelinum (strain ATCC BAA-846 / DSM 112012 / S4) (Agrobacterium vitis (strain S4)).